A 152-amino-acid polypeptide reads, in one-letter code: Spermine/spermidine N(1)-acetyltransferase (152 aa).

The N-acetyltransferase domain maps to 3-152 (INIKAVTDDN…NGEKVMVKEL (150 aa)). Acetyl-CoA is bound by residues 82–84 (FFI), 89–95 (QGKGLGK), and 122–131 (NIHAIRLYQR). Tyr129 (proton donor) is an active-site residue.

Belongs to the acetyltransferase family.

It catalyses the reaction an alkane-alpha,omega-diamine + acetyl-CoA = an N-acetylalkane-alpha,omega-diamine + CoA + H(+). It carries out the reaction spermine + acetyl-CoA = N(1)-acetylspermine + CoA + H(+). The catalysed reaction is spermidine + acetyl-CoA = N(1)-acetylspermidine + CoA + H(+). It participates in amine and polyamine degradation; spermine degradation. It functions in the pathway amine and polyamine degradation; spermidine degradation. Its activity is regulated as follows. Putrescine and N(8)-acetylspermidine are competitive inhibitors of spermidine acetylation. In terms of biological role, acetylates both spermidine and spermine at primary propyl amine moieties, with spermine being the preferred substrate. The chain is Spermine/spermidine N(1)-acetyltransferase (bltD) from Bacillus subtilis (strain 168).